We begin with the raw amino-acid sequence, 105 residues long: Large ribosomal subunit protein uL24 (105 aa).

This sequence belongs to the universal ribosomal protein uL24 family. Part of the 50S ribosomal subunit.

One of two assembly initiator proteins, it binds directly to the 5'-end of the 23S rRNA, where it nucleates assembly of the 50S subunit. Functionally, one of the proteins that surrounds the polypeptide exit tunnel on the outside of the subunit. The polypeptide is Large ribosomal subunit protein uL24 (Saccharophagus degradans (strain 2-40 / ATCC 43961 / DSM 17024)).